The following is a 484-amino-acid chain: Protein nucleotidyltransferase YdiU (484 aa).

Positions 81, 83, 84, 103, 115, 116, 166, and 173 each coordinate ATP. Residue Asp-244 is the Proton acceptor of the active site. Asn-245 and Asp-254 together coordinate Mg(2+). Asp-254 is an ATP binding site.

Belongs to the SELO family. Mg(2+) is required as a cofactor. The cofactor is Mn(2+).

It carries out the reaction L-seryl-[protein] + ATP = 3-O-(5'-adenylyl)-L-seryl-[protein] + diphosphate. It catalyses the reaction L-threonyl-[protein] + ATP = 3-O-(5'-adenylyl)-L-threonyl-[protein] + diphosphate. The catalysed reaction is L-tyrosyl-[protein] + ATP = O-(5'-adenylyl)-L-tyrosyl-[protein] + diphosphate. The enzyme catalyses L-histidyl-[protein] + UTP = N(tele)-(5'-uridylyl)-L-histidyl-[protein] + diphosphate. It carries out the reaction L-seryl-[protein] + UTP = O-(5'-uridylyl)-L-seryl-[protein] + diphosphate. It catalyses the reaction L-tyrosyl-[protein] + UTP = O-(5'-uridylyl)-L-tyrosyl-[protein] + diphosphate. Functionally, nucleotidyltransferase involved in the post-translational modification of proteins. It can catalyze the addition of adenosine monophosphate (AMP) or uridine monophosphate (UMP) to a protein, resulting in modifications known as AMPylation and UMPylation. The chain is Protein nucleotidyltransferase YdiU from Shewanella loihica (strain ATCC BAA-1088 / PV-4).